The sequence spans 312 residues: Olfactory receptor 7D4 (312 aa).

The Extracellular portion of the chain corresponds to 1–25 (MEAENLTELSKFLLLGLSDDPELQP). An N-linked (GlcNAc...) asparagine glycan is attached at asparagine 5. Residues 26-46 (VLFGLFLSMYLVTVLGNLLII) traverse the membrane as a helical segment. Topologically, residues 47 to 54 (LAVSSDSH) are cytoplasmic. A helical transmembrane segment spans residues 55-75 (LHTPMYFFLSNLSFVDICFIS). Residues 76 to 99 (TTVPKMLVSIQARSKDISYMGCLT) lie on the Extracellular side of the membrane. Cysteine 97 and cysteine 189 are disulfide-bonded. A helical membrane pass occupies residues 100 to 120 (QVYFLMMFAGMDTFLLAVMAY). Over 121–139 (DRFVAICHPLHYTVIMNPC) the chain is Cytoplasmic. Residues 140-160 (LCGLLVLASWFIIFWFSLVHI) form a helical membrane-spanning segment. At 161-197 (LLMKRLTFSTGTEIPHFFCEPAQVLKVACSNTLLNNI) the chain is on the extracellular side. A helical membrane pass occupies residues 198–217 (VLYVATALLGVFPVAGILFS). Over 218–237 (YSQIVSSLMGMSSTKGKYKA) the chain is Cytoplasmic. A helical transmembrane segment spans residues 238–258 (FSTCGSHLCVVSLFYGTGLGV). Over 259–271 (YLSSAVTHSSQSS) the chain is Extracellular. A helical transmembrane segment spans residues 272-292 (STASVMYAMVTPMLNPFIYSL). Topologically, residues 293 to 312 (RNKDVKGALERLLSRADSCP) are cytoplasmic.

This sequence belongs to the G-protein coupled receptor 1 family. In terms of tissue distribution, nasal olfactory epithelium.

It is found in the cell membrane. In terms of biological role, odorant receptor. Selectively activated by androstenone and the related odorous steroid androstadienone. This Homo sapiens (Human) protein is Olfactory receptor 7D4 (OR7D4).